Here is a 201-residue protein sequence, read N- to C-terminus: Recombination protein RecR (201 aa).

The C4-type zinc finger occupies 60 to 75 (CSVCGNVDTSDPCTIC). The 96-residue stretch at 83 to 178 (ATLIVVEDVS…RVTKLAHGVP (96 aa)) folds into the Toprim domain.

Belongs to the RecR family.

In terms of biological role, may play a role in DNA repair. It seems to be involved in an RecBC-independent recombinational process of DNA repair. It may act with RecF and RecO. This Chelativorans sp. (strain BNC1) protein is Recombination protein RecR.